The following is a 224-amino-acid chain: Orotate phosphoribosyltransferase (224 aa).

5-phospho-alpha-D-ribose 1-diphosphate is bound by residues Lys-26, 73 to 74 (YK), Arg-100, Lys-101, Lys-104, His-106, and 127 to 135 (EDVTTSGKS). Residues Thr-131 and Arg-160 each coordinate orotate.

It belongs to the purine/pyrimidine phosphoribosyltransferase family. PyrE subfamily. As to quaternary structure, homodimer. Mg(2+) is required as a cofactor.

It catalyses the reaction orotidine 5'-phosphate + diphosphate = orotate + 5-phospho-alpha-D-ribose 1-diphosphate. Its pathway is pyrimidine metabolism; UMP biosynthesis via de novo pathway; UMP from orotate: step 1/2. Catalyzes the transfer of a ribosyl phosphate group from 5-phosphoribose 1-diphosphate to orotate, leading to the formation of orotidine monophosphate (OMP). This Clostridium botulinum (strain Alaska E43 / Type E3) protein is Orotate phosphoribosyltransferase.